The primary structure comprises 672 residues: UvrABC system protein B (672 aa).

One can recognise a Helicase ATP-binding domain in the interval 26–181 (AGLEDGLAYQ…ILQRLAELQY (156 aa)). 39–46 (GVTGSGKT) serves as a coordination point for ATP. The Beta-hairpin signature appears at 92–115 (YYDYYQPEAYVPSSDTYIEKDASI). The Helicase C-terminal domain occupies 430–592 (QVDDLLSEIK…ITPKSIQKAV (163 aa)). Residues 631–666 (AKELRKLEEQMYHHARNLEFEEAAAVRDKIQHIRKG) enclose the UVR domain.

Belongs to the UvrB family. In terms of assembly, forms a heterotetramer with UvrA during the search for lesions. Interacts with UvrC in an incision complex.

The protein localises to the cytoplasm. In terms of biological role, the UvrABC repair system catalyzes the recognition and processing of DNA lesions. A damage recognition complex composed of 2 UvrA and 2 UvrB subunits scans DNA for abnormalities. Upon binding of the UvrA(2)B(2) complex to a putative damaged site, the DNA wraps around one UvrB monomer. DNA wrap is dependent on ATP binding by UvrB and probably causes local melting of the DNA helix, facilitating insertion of UvrB beta-hairpin between the DNA strands. Then UvrB probes one DNA strand for the presence of a lesion. If a lesion is found the UvrA subunits dissociate and the UvrB-DNA preincision complex is formed. This complex is subsequently bound by UvrC and the second UvrB is released. If no lesion is found, the DNA wraps around the other UvrB subunit that will check the other stand for damage. The polypeptide is UvrABC system protein B (Coxiella burnetii (strain Dugway 5J108-111)).